The chain runs to 160 residues: Transcriptional repressor NrdR (160 aa).

The span at Met1–Thr11 shows a compositional bias: polar residues. The tract at residues Met1–Glu20 is disordered. A zinc finger lies at Cys3–Cys34. Residues Leu49–Asp139 form the ATP-cone domain.

This sequence belongs to the NrdR family. It depends on Zn(2+) as a cofactor.

Functionally, negatively regulates transcription of bacterial ribonucleotide reductase nrd genes and operons by binding to NrdR-boxes. This is Transcriptional repressor NrdR from Rhodopseudomonas palustris (strain BisB5).